Reading from the N-terminus, the 223-residue chain is Membrane-associated progesterone receptor component 2 (223 aa).

A disordered region spans residues 1–33; it reads MAAGDGDVKLGTLGSGSESSNDGGSESPGDAGA. The O-linked (Xyl...) (chondroitin sulfate) serine glycan is linked to S15. The span at 15–33 shows a compositional bias: low complexity; that stretch reads SGSESSNDGGSESPGDAGA. The chain crosses the membrane as a helical span at residues 42–66; the sequence is AAALALLTGGGEMLLNVALVALVLL. S90, S104, and S208 each carry phosphoserine. The region spanning 102 to 201 is the Cytochrome b5 heme-binding domain; it reads DFSLEQLRQY…EKYDYVGRLL (100 aa). Residues 202–223 are disordered; sequence KPGEEPSEYTDEEDTKDHNKQD. Residues 206–215 are compositionally biased toward acidic residues; that stretch reads EPSEYTDEED. Residue Y210 is modified to Phosphotyrosine. T211 carries the post-translational modification Phosphothreonine.

It belongs to the cytochrome b5 family. MAPR subfamily. In terms of assembly, interacts with PGRMC1. Interacts with AAAS. In terms of tissue distribution, expressed by endometrial glands and stroma (at protein level). Detected in urine (at protein level).

Its subcellular location is the membrane. It localises to the nucleus envelope. The protein localises to the endoplasmic reticulum. The protein resides in the secreted. Its function is as follows. Required for the maintenance of uterine histoarchitecture and normal female reproductive lifespan. May serve as a universal non-classical progesterone receptor in the uterus. Intracellular heme chaperone required for delivery of labile, or signaling heme, to the nucleus. Plays a role in adipocyte function and systemic glucose homeostasis. In brown fat, which has a high demand for heme, delivery of labile heme in the nucleus regulates the activity of heme-responsive transcriptional repressors such as NR1D1 and BACH1. This Homo sapiens (Human) protein is Membrane-associated progesterone receptor component 2.